A 199-amino-acid polypeptide reads, in one-letter code: Elongation factor Ts (199 aa).

The interval 82-85 (TDFV) is involved in Mg(2+) ion dislocation from EF-Tu.

Belongs to the EF-Ts family.

The protein localises to the cytoplasm. Functionally, associates with the EF-Tu.GDP complex and induces the exchange of GDP to GTP. It remains bound to the aminoacyl-tRNA.EF-Tu.GTP complex up to the GTP hydrolysis stage on the ribosome. The sequence is that of Elongation factor Ts from Leptospira interrogans serogroup Icterohaemorrhagiae serovar Lai (strain 56601).